Reading from the N-terminus, the 105-residue chain is uncharacterized protein (105 aa).

The chain crosses the membrane as a helical span at residues 41-62 (GIITKIAASPFVIVLYFNTAFF).

It is found in the membrane. This is an uncharacterized protein from Saccharomyces cerevisiae (strain ATCC 204508 / S288c) (Baker's yeast).